We begin with the raw amino-acid sequence, 360 residues long: Probable neutral protease 2 homolog MCYG_04257 (360 aa).

The first 17 residues, 1 to 17, serve as a signal peptide directing secretion; it reads MQLIAFLAALGVPVAFA. A propeptide spanning residues 18 to 182 is cleaved from the precursor; that stretch reads ATIPSVPLNH…KVKAGSIDKR (165 aa). Residues Cys190 and Cys261 are joined by a disulfide bond. A glycan (N-linked (GlcNAc...) asparagine) is linked at Asn262. Intrachain disulfides connect Cys268–Cys286 and Cys300–Cys360. Position 311 (His311) interacts with Zn(2+). Glu312 is a catalytic residue. Zn(2+) is bound by residues His315 and Asp326.

It belongs to the peptidase M35 family. Requires Zn(2+) as cofactor.

It is found in the secreted. It catalyses the reaction Preferential cleavage of bonds with hydrophobic residues in P1'. Also 3-Asn-|-Gln-4 and 8-Gly-|-Ser-9 bonds in insulin B chain.. Probable secreted metalloprotease that shows high activities on basic nuclear substrates such as histone and protamine. May be involved in virulence. This is Probable neutral protease 2 homolog MCYG_04257 from Arthroderma otae (strain ATCC MYA-4605 / CBS 113480) (Microsporum canis).